Consider the following 202-residue polypeptide: Large ribosomal subunit protein bL25 (202 aa).

Residues 180-202 are disordered; that stretch reads PKQEAFEEDAEPSPGEEPEGENQ. Residues 185-202 show a composition bias toward acidic residues; it reads FEEDAEPSPGEEPEGENQ.

It belongs to the bacterial ribosomal protein bL25 family. CTC subfamily. In terms of assembly, part of the 50S ribosomal subunit; part of the 5S rRNA/L5/L18/L25 subcomplex. Contacts the 5S rRNA. Binds to the 5S rRNA independently of L5 and L18.

Its function is as follows. This is one of the proteins that binds to the 5S RNA in the ribosome where it forms part of the central protuberance. The chain is Large ribosomal subunit protein bL25 from Bacillus velezensis (strain DSM 23117 / BGSC 10A6 / LMG 26770 / FZB42) (Bacillus amyloliquefaciens subsp. plantarum).